The following is a 564-amino-acid chain: Type 2 DNA topoisomerase 6 subunit B (564 aa).

ATP is bound by residues asparagine 46, aspartate 78, 99-100, 109-116, and lysine 471; these read TK and GQQGIGIS.

The protein belongs to the TOP6B family. In terms of assembly, homodimer. Heterotetramer of two Top6A and two Top6B chains.

It carries out the reaction ATP-dependent breakage, passage and rejoining of double-stranded DNA.. In terms of biological role, relaxes both positive and negative superturns and exhibits a strong decatenase activity. The protein is Type 2 DNA topoisomerase 6 subunit B of Pyrococcus abyssi (strain GE5 / Orsay).